The primary structure comprises 279 residues: Tumor necrosis factor ligand superfamily member 6 (279 aa).

The Cytoplasmic segment spans residues methionine 1–asparagine 78. Residues phenylalanine 30–leucine 70 are disordered. The span at proline 45–threonine 68 shows a compositional bias: pro residues. The chain crosses the membrane as a helical; Signal-anchor for type II membrane protein span at residues leucine 79–tyrosine 100. The Extracellular segment spans residues glutamine 101–leucine 279. Asparagine 117 carries N-linked (GlcNAc...) asparagine glycosylation. The segment covering glutamate 126–proline 135 has biased composition (polar residues). The interval glutamate 126–asparagine 150 is disordered. The 137-residue stretch at serine 143 to leucine 279 folds into the THD domain. Asparagine 182 carries N-linked (GlcNAc...) asparagine glycosylation. The cysteines at positions 200 and 231 are disulfide-linked. 2 N-linked (GlcNAc...) asparagine glycosylation sites follow: asparagine 248 and asparagine 258.

Belongs to the tumor necrosis factor family. Homotrimer. Interacts with ARHGAP9, BAIAP2L1, BTK, CACNB3, CACNB4, CRK, DLG2, DNMBP, DOCK4, EPS8L3, FGR, FYB1, FYN, HCK, ITK, ITSN2, KALRN, LYN, MACC1, MIA, MPP4, MYO15A, NCF1, NCK1, NCK2, NCKIPSD, OSTF1, PIK3R1, PSTPIP1, RIMBP3C, SAMSN1, SH3GL3, SH3PXD2B, SH3PXD2A, SH3RF2, SKAP2, SNX33, SNX9, SORBS3, SPTA1, SRC, SRGAP1, SRGAP2, SRGAP3, TEC, TJP3 and YES1. In terms of processing, the soluble form derives from the membrane form by proteolytic processing. The membrane-bound form undergoes two successive intramembrane proteolytic cleavages. The first one is processed by ADAM10 producing an N-terminal fragment, which lacks the receptor-binding extracellular domain. This ADAM10-processed FasL (FAsL APL) remnant form is still membrane anchored and further processed by SPPL2A that liberates the FasL intracellular domain (FasL ICD). FasL shedding by ADAM10 is a prerequisite for subsequent intramembrane cleavage by SPPL2A in T-cells. Phosphorylated by FGR on tyrosine residues; this is required for ubiquitination and subsequent internalization. Post-translationally, N-glycosylated. Glycosylation enhances apoptotic activity. In terms of processing, monoubiquitinated. In terms of tissue distribution, expressed in T-cells. Expressed in natural killer cells.

Its subcellular location is the cell membrane. It localises to the cytoplasmic vesicle lumen. The protein resides in the lysosome lumen. It is found in the secreted. The protein localises to the nucleus. Cytokine that binds to TNFRSF6/FAS, a receptor that transduces the apoptotic signal into cells. Involved in cytotoxic T-cell-mediated apoptosis, natural killer cell-mediated apoptosis and in T-cell development. Initiates fratricidal/suicidal activation-induced cell death (AICD) in antigen-activated T-cells contributing to the termination of immune responses. TNFRSF6/FAS-mediated apoptosis also has a role in the induction of peripheral tolerance. Binds to TNFRSF6B/DcR3, a decoy receptor that blocks apoptosis. In terms of biological role, induces FAS-mediated activation of NF-kappa-B, initiating non-apoptotic signaling pathways. Can induce apoptosis but does not appear to be essential for this process. Its function is as follows. Cytoplasmic form induces gene transcription inhibition. The chain is Tumor necrosis factor ligand superfamily member 6 (Faslg) from Mus musculus (Mouse).